The following is a 368-amino-acid chain: DNA integrity scanning protein DisA (368 aa).

A DAC domain is found at 15–153; that stretch reads DERLRATLAA…DGRRHVLDEP (139 aa). ATP contacts are provided by residues G82, L100, and 113-117; that span reads TRHRS. The interval 101-121 is disordered; sequence QPDPSIPTNESGTRHRSAERT. The span at 112–121 shows a compositional bias: basic and acidic residues; the sequence is GTRHRSAERT.

Belongs to the DisA family. Homooctamer. The cofactor is Mg(2+).

It catalyses the reaction 2 ATP = 3',3'-c-di-AMP + 2 diphosphate. Functionally, participates in a DNA-damage check-point. DisA forms globular foci that rapidly scan along the chromosomes searching for lesions. In terms of biological role, also has diadenylate cyclase activity, catalyzing the condensation of 2 ATP molecules into cyclic di-AMP (c-di-AMP). c-di-AMP likely acts as a signaling molecule that may couple DNA integrity with a cellular process. This Acidothermus cellulolyticus (strain ATCC 43068 / DSM 8971 / 11B) protein is DNA integrity scanning protein DisA.